The sequence spans 208 residues: MEVNVYNIKGEDTGRKVTLNESIFGIEPNDHAIYLDVKQFMANQRQGTHKSKERSEISGSTRKIGRQKGGGGARRGDMNSPVLVGGGRVFGPKPRDYYFKLNKKVKTLARKSALSYKAQDNAIVVVEDFNFEAPKTKVFVEMTKNLKVSDKKLLVVLPEANKNVYLSARNIEGANVQTISGLNTYRVLNAGVVVLTESSLKAIDNILI.

Residues 44–79 are disordered; the sequence is QRQGTHKSKERSEISGSTRKIGRQKGGGGARRGDMN.

The protein belongs to the universal ribosomal protein uL4 family. In terms of assembly, part of the 50S ribosomal subunit.

One of the primary rRNA binding proteins, this protein initially binds near the 5'-end of the 23S rRNA. It is important during the early stages of 50S assembly. It makes multiple contacts with different domains of the 23S rRNA in the assembled 50S subunit and ribosome. Its function is as follows. Forms part of the polypeptide exit tunnel. The polypeptide is Large ribosomal subunit protein uL4 (Bacteroides fragilis (strain YCH46)).